Consider the following 2178-residue polypeptide: DNA-directed RNA polymerase subunit beta (2178 aa).

Insert regions lie at residues S269–V325, K714–N1508, and K1703–M1900.

Belongs to the RNA polymerase beta chain family. In plastids the minimal PEP RNA polymerase catalytic core is composed of four subunits: alpha, beta, beta', and beta''. When a (nuclear-encoded) sigma factor is associated with the core the holoenzyme is formed, which can initiate transcription.

It is found in the plastid. Its subcellular location is the chloroplast. The catalysed reaction is RNA(n) + a ribonucleoside 5'-triphosphate = RNA(n+1) + diphosphate. Functionally, DNA-dependent RNA polymerase catalyzes the transcription of DNA into RNA using the four ribonucleoside triphosphates as substrates. The protein is DNA-directed RNA polymerase subunit beta of Tupiella akineta (Green alga).